We begin with the raw amino-acid sequence, 497 residues long: NADH-quinone oxidoreductase subunit N (497 aa).

13 helical membrane passes run 12 to 32, 40 to 60, 80 to 100, 116 to 136, 166 to 186, 208 to 228, 240 to 260, 284 to 304, 316 to 336, 341 to 361, 383 to 403, 430 to 450, and 457 to 477; these read MAPE…DLAL, PLAW…AAMI, AFKF…AEWA, LFAL…TLFV, VING…VFGL, LALA…TVPF, PVPA…ALLL, MQPI…VVAL, SGIA…WAMI, MYLL…AHIV, AAAL…AGFI, TVIS…RPTF, and LPAG…AIGW.

Belongs to the complex I subunit 2 family. In terms of assembly, NDH-1 is composed of 14 different subunits. Subunits NuoA, H, J, K, L, M, N constitute the membrane sector of the complex.

The protein localises to the cell membrane. The enzyme catalyses a quinone + NADH + 5 H(+)(in) = a quinol + NAD(+) + 4 H(+)(out). In terms of biological role, NDH-1 shuttles electrons from NADH, via FMN and iron-sulfur (Fe-S) centers, to quinones in the respiratory chain. The immediate electron acceptor for the enzyme in this species is believed to be a menaquinone. Couples the redox reaction to proton translocation (for every two electrons transferred, four hydrogen ions are translocated across the cytoplasmic membrane), and thus conserves the redox energy in a proton gradient. The protein is NADH-quinone oxidoreductase subunit N of Geobacillus kaustophilus (strain HTA426).